A 346-amino-acid polypeptide reads, in one-letter code: MKQIINPLKGNNNKVPIWFMRQAGRYLPEYKKVRETTKNFLDFCYDVSKATEVTLQPIKRYGFDAAIIFSDILVLPHALGWEVDFKENIGPILKQFKSQEDFKYLQINPNYKLEKVYEIIKKVKKELPSPISLIGFAGSPWTVMSYMLEGKGKQDFKTSKKFIYENKILAEELLNFITEKTADHLINQAKSGADVLKLFDSWSGVLAEEEFTEFVIEPTKKIILKVKEVFPKTPIIAFPKGAGLLYEKFIKEVPIDVLAVDQMVPLEKMKEWSDKVIVQGNLDPVVLLTNKEIIKEKTYKILQVMKGKNFIFNLGHGILPETPTENVEFLTEYVRLYEEKNSNSTF.

Substrate is bound by residues 21–25 (RQAGR), F40, D71, Y146, S201, and H316.

This sequence belongs to the uroporphyrinogen decarboxylase family. As to quaternary structure, homodimer.

The protein localises to the cytoplasm. The enzyme catalyses uroporphyrinogen III + 4 H(+) = coproporphyrinogen III + 4 CO2. It participates in porphyrin-containing compound metabolism; protoporphyrin-IX biosynthesis; coproporphyrinogen-III from 5-aminolevulinate: step 4/4. In terms of biological role, catalyzes the decarboxylation of four acetate groups of uroporphyrinogen-III to yield coproporphyrinogen-III. The protein is Uroporphyrinogen decarboxylase of Rickettsia conorii (strain ATCC VR-613 / Malish 7).